A 214-amino-acid chain; its full sequence is Large ribosomal subunit protein uL16 (214 aa).

Arg32 carries the citrulline modification. Lys175 is covalently cross-linked (Glycyl lysine isopeptide (Lys-Gly) (interchain with G-Cter in SUMO2)). Residue Lys188 forms a Glycyl lysine isopeptide (Lys-Gly) (interchain with G-Cter in ubiquitin) linkage.

The protein belongs to the universal ribosomal protein uL16 family. As to quaternary structure, component of the large ribosomal subunit. Mature ribosomes consist of a small (40S) and a large (60S) subunit. The 40S subunit contains about 33 different proteins and 1 molecule of RNA (18S). The 60S subunit contains about 49 different proteins and 3 molecules of RNA (28S, 5.8S and 5S). In terms of processing, citrullinated by PADI4. Post-translationally, ufmylated by UFL1.

The protein resides in the cytoplasm. Functionally, component of the large ribosomal subunit. Plays a role in the formation of actively translating ribosomes. May play a role in the embryonic brain development. The sequence is that of Large ribosomal subunit protein uL16 (RPL10) from Oryctolagus cuniculus (Rabbit).